A 226-amino-acid chain; its full sequence is Putative ABC transporter ATP-binding protein BH02760 (226 aa).

The ABC transporter domain maps to 4-222 (IKFDKVTQVF…IPLVAIKEYI (219 aa)). ATP is bound at residue 35–42 (GANGSGKS).

The protein belongs to the ABC transporter superfamily.

The protein localises to the cell inner membrane. Functionally, probably part of an ABC transporter complex. Responsible for energy coupling to the transport system. In Bartonella henselae (strain ATCC 49882 / DSM 28221 / CCUG 30454 / Houston 1) (Rochalimaea henselae), this protein is Putative ABC transporter ATP-binding protein BH02760.